Reading from the N-terminus, the 78-residue chain is Large ribosomal subunit protein eL38 (78 aa).

The protein belongs to the eukaryotic ribosomal protein eL38 family.

The polypeptide is Large ribosomal subunit protein eL38 (RpL38) (Maconellicoccus hirsutus (Pink hibiscus mealybug)).